A 374-amino-acid polypeptide reads, in one-letter code: Chaperone protein DnaJ (374 aa).

The J domain occupies 5–70 (DYYEILEIER…GKRQLYDRYG (66 aa)). The CR-type zinc finger occupies 136–213 (GCKKEIKIRY…CNGKGHENKE (78 aa)). The Zn(2+) site is built by Cys149, Cys152, Cys165, Cys168, Cys187, Cys190, Cys201, and Cys204. CXXCXGXG motif repeat units lie at residues 149 to 156 (CPDCKGTG), 165 to 172 (CPDCGGRG), 187 to 194 (CPKCGGSG), and 201 to 208 (CPKCNGKG).

This sequence belongs to the DnaJ family. In terms of assembly, homodimer. It depends on Zn(2+) as a cofactor.

Its subcellular location is the cytoplasm. Its function is as follows. Participates actively in the response to hyperosmotic and heat shock by preventing the aggregation of stress-denatured proteins and by disaggregating proteins, also in an autonomous, DnaK-independent fashion. Unfolded proteins bind initially to DnaJ; upon interaction with the DnaJ-bound protein, DnaK hydrolyzes its bound ATP, resulting in the formation of a stable complex. GrpE releases ADP from DnaK; ATP binding to DnaK triggers the release of the substrate protein, thus completing the reaction cycle. Several rounds of ATP-dependent interactions between DnaJ, DnaK and GrpE are required for fully efficient folding. Also involved, together with DnaK and GrpE, in the DNA replication of plasmids through activation of initiation proteins. This is Chaperone protein DnaJ from Wolinella succinogenes (strain ATCC 29543 / DSM 1740 / CCUG 13145 / JCM 31913 / LMG 7466 / NCTC 11488 / FDC 602W) (Vibrio succinogenes).